The chain runs to 336 residues: Dihydrolipoyl dehydrogenase (336 aa).

FAD contacts are provided by residues 34–42 (EKEVVGGIC), Lys-51, and Gly-115. Cys-42 and Cys-47 are disulfide-bonded. NAD(+) is bound by residues 180 to 184 (GGGVI), Glu-203, Val-237, and 264 to 267 (SVGT). FAD contacts are provided by Asp-304 and Ala-312.

This sequence belongs to the class-I pyridine nucleotide-disulfide oxidoreductase family. As to quaternary structure, homodimer. It depends on FAD as a cofactor.

The protein localises to the cytoplasm. The enzyme catalyses N(6)-[(R)-dihydrolipoyl]-L-lysyl-[protein] + NAD(+) = N(6)-[(R)-lipoyl]-L-lysyl-[protein] + NADH + H(+). Lipoamide dehydrogenase is a component of the alpha-ketoacid dehydrogenase complexes. This is Dihydrolipoyl dehydrogenase (pdhD) from Acholeplasma laidlawii.